Here is a 476-residue protein sequence, read N- to C-terminus: Cysteine--tRNA ligase (476 aa).

C36 is a binding site for Zn(2+). The short motif at 38-48 (PTVYDYAHIGN) is the 'HIGH' region element. Zn(2+)-binding residues include C221, H246, and E250. The short motif at 278–282 (KMSKS) is the 'KMSKS' region element. K281 is an ATP binding site.

Belongs to the class-I aminoacyl-tRNA synthetase family. Monomer. The cofactor is Zn(2+).

The protein resides in the cytoplasm. It carries out the reaction tRNA(Cys) + L-cysteine + ATP = L-cysteinyl-tRNA(Cys) + AMP + diphosphate. The protein is Cysteine--tRNA ligase of Chlamydia felis (strain Fe/C-56) (Chlamydophila felis).